Consider the following 658-residue polypeptide: Interferon-induced GTP-binding protein Mx1 (658 aa).

N-acetylmethionine is present on M1. A disordered region spans residues M1–L20. In terms of domain architecture, Dynamin-type G spans D65 to P338. The interval G75 to S82 is G1 motif. G75–S82 is a GTP binding site. Residues V100–R102 are G2 motif. A G3 motif region spans residues D176–G179. Residues D176 to I180 and T245 to D248 each bind GTP. The interval T245–D248 is G4 motif. The tract at residues K277–G280 is G5 motif. Residues L339–E364 form a bundle signaling element (BSE) region. Positions E364–C531 are middle domain. The tract at residues E365 to E628 is stalk. Residues K551–K554 are critical for lipid-binding. Residues L570–G658 form the GED domain.

Belongs to the TRAFAC class dynamin-like GTPase superfamily. Dynamin/Fzo/YdjA family. As to quaternary structure, homooligomer. Oligomerizes into multimeric filamentous or ring-like structures by virtue of its stalk domain. Oligomerization is critical for GTPase activity, protein stability, and recognition of viral target structures. Interacts with TRPC1, TRPC3, TRPC4, TRPC5, TRPC6 and TRPC7. Interacts with HSPA5. Interacts with TUBB/TUBB5. Interacts with DDX39A and DDX39B. Post-translationally, ISGylated.

It localises to the cytoplasm. It is found in the endoplasmic reticulum membrane. The protein localises to the perinuclear region. Functionally, interferon-induced dynamin-like GTPase with antiviral activity. In Eumetopias jubatus (Steller sea lion), this protein is Interferon-induced GTP-binding protein Mx1 (MX1).